Consider the following 456-residue polypeptide: tRNA modification GTPase MnmE (456 aa).

Positions 24, 81, and 120 each coordinate (6S)-5-formyl-5,6,7,8-tetrahydrofolate. Residues 216–379 (GMTVVIAGRP…LRDHLKGCMG (164 aa)) enclose the TrmE-type G domain. N226 is a K(+) binding site. GTP-binding positions include 226 to 231 (NAGKSS), 245 to 251 (TDIAGTT), 270 to 273 (DTAG), and 335 to 338 (NKAD). Mg(2+) is bound at residue S230. K(+) is bound by residues T245, I247, and T250. Position 251 (T251) interacts with Mg(2+). Residue K456 coordinates (6S)-5-formyl-5,6,7,8-tetrahydrofolate.

It belongs to the TRAFAC class TrmE-Era-EngA-EngB-Septin-like GTPase superfamily. TrmE GTPase family. Homodimer. Heterotetramer of two MnmE and two MnmG subunits. Requires K(+) as cofactor.

It is found in the cytoplasm. Its function is as follows. Exhibits a very high intrinsic GTPase hydrolysis rate. Involved in the addition of a carboxymethylaminomethyl (cmnm) group at the wobble position (U34) of certain tRNAs, forming tRNA-cmnm(5)s(2)U34. This is tRNA modification GTPase MnmE from Pseudomonas putida (strain ATCC 47054 / DSM 6125 / CFBP 8728 / NCIMB 11950 / KT2440).